Reading from the N-terminus, the 288-residue chain is NAD(P)H-hydrate epimerase (288 aa).

A mitochondrion-targeting transit peptide spans 1–48 (MSALRALLGLGLLAAGSRLRRVPGRAGACPAGSAWWEARRPHSGGGGE). The YjeF N-terminal domain occupies 65–275 (AQAVDEELFN…ALEKKYQLNL (211 aa)). Residue 119-123 (NNGGD) participates in (6S)-NADPHX binding. A K(+)-binding site is contributed by N120. Position 144 is an N6-succinyllysine (K144). D185 serves as a coordination point for K(+). Residues 189 to 195 (GFSFKGD) and D218 each bind (6S)-NADPHX. K(+) is bound at residue S221.

It belongs to the NnrE/AIBP family. As to quaternary structure, homodimer. Interacts with APOA1 and APOA2. K(+) serves as cofactor. Post-translationally, undergoes physiological phosphorylation during sperm capacitation, downstream to PKA activation.

It is found in the mitochondrion. The protein resides in the secreted. The catalysed reaction is (6R)-NADHX = (6S)-NADHX. It carries out the reaction (6R)-NADPHX = (6S)-NADPHX. Catalyzes the epimerization of the S- and R-forms of NAD(P)HX, a damaged form of NAD(P)H that is a result of enzymatic or heat-dependent hydration. This is a prerequisite for the S-specific NAD(P)H-hydrate dehydratase to allow the repair of both epimers of NAD(P)HX. Accelerates cholesterol efflux from endothelial cells to high-density lipoprotein (HDL) and thereby regulates angiogenesis. In Canis lupus familiaris (Dog), this protein is NAD(P)H-hydrate epimerase.